Reading from the N-terminus, the 907-residue chain is Envelope glycoprotein B (907 aa).

The first 22 residues, 1–22 (MESRIWCLVVCVNLCIVCLGAA), serve as a signal peptide directing secretion. At 23–751 (VSSSSTRGTS…EGVATFLKNP (729 aa)) the chain is on the virion surface side. Residues 29–62 (RGTSATHSHHSSHTTSAAHSRSGSVSQRVTSSQT) form a disordered region. Residues 41–62 (HTTSAAHSRSGSVSQRVTSSQT) show a composition bias toward low complexity. 3 N-linked (GlcNAc...) asparagine; by host glycosylation sites follow: asparagine 68, asparagine 73, and asparagine 85. Intrachain disulfides connect cysteine 94–cysteine 551, cysteine 111–cysteine 507, cysteine 185–cysteine 250, and cysteine 344–cysteine 391. The interval 152–158 (SYAYIHT) is involved in fusion and/or binding to host membrane. The N-linked (GlcNAc...) asparagine; by host glycan is linked to asparagine 208. The tract at residues 237-244 (GSTWLYRE) is involved in fusion and/or binding to host membrane. 14 N-linked (GlcNAc...) asparagine; by host glycosylation sites follow: asparagine 281, asparagine 286, asparagine 302, asparagine 341, asparagine 383, asparagine 405, asparagine 409, asparagine 417, asparagine 447, asparagine 452, asparagine 456, asparagine 466, asparagine 555, and asparagine 586. Cysteine 574 and cysteine 611 are oxidised to a cystine. 2 hydrophobic membrane proximal region regions span residues 697–749 (VEDK…TFLK) and 708–748 (YLKG…ATFL). The chain crosses the membrane as a helical span at residues 752-772 (FGAFTIILVAIAVVIIIYLIY). At 773–907 (TRQRRLCMQP…LKDSDEEENV (135 aa)) the chain is on the intravirion side. 2 stretches are compositionally biased toward polar residues: residues 798-810 (VTSG…SLQA) and 860-877 (RAQQ…GTQD). Disordered regions lie at residues 798 to 838 (VTSG…TAAP) and 860 to 907 (RAQQ…EENV). Basic and acidic residues predominate over residues 878–887 (KGQKPNLLDR). The short motif at 895–898 (YRHL) is the Internalization motif element.

It belongs to the herpesviridae glycoprotein B family. Homotrimer; disulfide-linked. Binds to heparan sulfate proteoglycans. Interacts with gH/gL heterodimer. Interacts with host C-type lectin CD209/DC-SIGN. Interacts with host ITGB1, EGFR, and PDGFRA. In terms of processing, a proteolytic cleavage by host furin generates two subunits that remain linked by disulfide bonds.

The protein resides in the virion membrane. It is found in the host cell membrane. Its subcellular location is the host endosome membrane. It localises to the host Golgi apparatus membrane. Its function is as follows. Envelope glycoprotein that plays a role in host cell entry, cell to-cell virus transmission, and fusion of infected cells. May be involved in the initial attachment via binding to heparan sulfate together with the gM/gN complex that binds heparin with higher affinity. Interacts with host integrin ITGB1, PDGFRA and EGFR that likely serve as postattachment entry receptors. Also participates in the fusion of viral and cellular membranes leading to virus entry into the host cell. Membrane fusion is mediated by the fusion machinery composed at least of gB and the heterodimer gH/gL. This Homo sapiens (Human) protein is Envelope glycoprotein B.